Consider the following 405-residue polypeptide: Probable tRNA sulfurtransferase (405 aa).

In terms of domain architecture, THUMP spans Glu-60–Leu-165. ATP is bound by residues Met-183–Leu-184, His-208–Phe-209, Arg-265, Gly-287, and Gln-296.

The protein belongs to the ThiI family.

The protein resides in the cytoplasm. It carries out the reaction [ThiI sulfur-carrier protein]-S-sulfanyl-L-cysteine + a uridine in tRNA + 2 reduced [2Fe-2S]-[ferredoxin] + ATP + H(+) = [ThiI sulfur-carrier protein]-L-cysteine + a 4-thiouridine in tRNA + 2 oxidized [2Fe-2S]-[ferredoxin] + AMP + diphosphate. It catalyses the reaction [ThiS sulfur-carrier protein]-C-terminal Gly-Gly-AMP + S-sulfanyl-L-cysteinyl-[cysteine desulfurase] + AH2 = [ThiS sulfur-carrier protein]-C-terminal-Gly-aminoethanethioate + L-cysteinyl-[cysteine desulfurase] + A + AMP + 2 H(+). It functions in the pathway cofactor biosynthesis; thiamine diphosphate biosynthesis. Catalyzes the ATP-dependent transfer of a sulfur to tRNA to produce 4-thiouridine in position 8 of tRNAs, which functions as a near-UV photosensor. Also catalyzes the transfer of sulfur to the sulfur carrier protein ThiS, forming ThiS-thiocarboxylate. This is a step in the synthesis of thiazole, in the thiamine biosynthesis pathway. The sulfur is donated as persulfide by IscS. This is Probable tRNA sulfurtransferase from Lactobacillus delbrueckii subsp. bulgaricus (strain ATCC BAA-365 / Lb-18).